Reading from the N-terminus, the 277-residue chain is Protein OPG166 (277 aa).

N-linked (GlcNAc...) asparagine; by host glycosylation is found at Asn-29 and Asn-58. A run of 5 helical transmembrane segments spans residues 124–144 (TMLMFIFTGITLFLLFLEITY), 156–176 (GILQVFGCVIAMIELCGAFLF), 186–206 (IIGLLMMTLPSIFLIITKVFS), 219–239 (LIIYYQLAGYILTVLGLGLSL), and 247–267 (LLLSGLGTIMVSEHFSLLFLV).

It belongs to the orthopoxvirus OPG166 protein family.

The protein localises to the host membrane. In terms of biological role, promotes, when overexpressed, the influx of extracellular Ca(2+), leading to membrane permeability and host cell necrosis. This chain is Protein OPG166 (OPG166), found in Vaccinia virus (strain Copenhagen) (VACV).